The primary structure comprises 359 residues: DNA polymerase IV (359 aa).

The 181-residue stretch at 4–184 (IVHVDMDAFY…LKVNRIPGVG (181 aa)) folds into the UmuC domain. Mg(2+) contacts are provided by Asp8 and Asp102. Residue Glu103 is part of the active site.

The protein belongs to the DNA polymerase type-Y family. As to quaternary structure, monomer. Mg(2+) is required as a cofactor.

It is found in the cytoplasm. The enzyme catalyses DNA(n) + a 2'-deoxyribonucleoside 5'-triphosphate = DNA(n+1) + diphosphate. In terms of biological role, poorly processive, error-prone DNA polymerase involved in untargeted mutagenesis. Copies undamaged DNA at stalled replication forks, which arise in vivo from mismatched or misaligned primer ends. These misaligned primers can be extended by PolIV. Exhibits no 3'-5' exonuclease (proofreading) activity. May be involved in translesional synthesis, in conjunction with the beta clamp from PolIII. This is DNA polymerase IV from Xanthomonas euvesicatoria pv. vesicatoria (strain 85-10) (Xanthomonas campestris pv. vesicatoria).